A 285-amino-acid chain; its full sequence is 2,3,4,5-tetrahydropyridine-2,6-dicarboxylate N-succinyltransferase (285 aa).

Residues R111 and D148 each contribute to the substrate site.

The protein belongs to the transferase hexapeptide repeat family. As to quaternary structure, homotrimer.

The protein resides in the cytoplasm. It catalyses the reaction (S)-2,3,4,5-tetrahydrodipicolinate + succinyl-CoA + H2O = (S)-2-succinylamino-6-oxoheptanedioate + CoA. Its pathway is amino-acid biosynthesis; L-lysine biosynthesis via DAP pathway; LL-2,6-diaminopimelate from (S)-tetrahydrodipicolinate (succinylase route): step 1/3. The sequence is that of 2,3,4,5-tetrahydropyridine-2,6-dicarboxylate N-succinyltransferase from Sinorhizobium fredii (strain NBRC 101917 / NGR234).